A 440-amino-acid chain; its full sequence is Glyceraldehyde-3-phosphate dehydrogenase, testis-specific (440 aa).

Positions 1–105 (MSRRDVVLTN…PPPPPLQKPA (105 aa)) are testis-specific N-terminal extension. Pro residues-rich tracts occupy residues 40-75 (PPKL…PPQI) and 83-102 (APPP…PPLQ). Residues 40–106 (PPKLEDPPPT…PPPPLQKPAR (67 aa)) are disordered. Residues 117–118 (RI), Asp138, Lys183, Tyr205, and Thr225 contribute to the NAD(+) site. Residues 255–257 (SCT), Thr286, 315–316 (TG), and Arg338 contribute to the D-glyceraldehyde 3-phosphate site. Cys256 functions as the Nucleophile in the catalytic mechanism. Residue Ser358 is modified to Phosphoserine. Asn420 contacts NAD(+).

This sequence belongs to the glyceraldehyde-3-phosphate dehydrogenase family. Homotetramer. As to expression, testis specific.

The protein resides in the cytoplasm. It carries out the reaction D-glyceraldehyde 3-phosphate + phosphate + NAD(+) = (2R)-3-phospho-glyceroyl phosphate + NADH + H(+). It participates in carbohydrate degradation; glycolysis; pyruvate from D-glyceraldehyde 3-phosphate: step 1/5. In terms of biological role, may play an important role in regulating the switch between different pathways for energy production during spermiogenesis and in the spermatozoon. Required for sperm motility and male fertility. The chain is Glyceraldehyde-3-phosphate dehydrogenase, testis-specific (Gapdhs) from Mus musculus (Mouse).